A 251-amino-acid chain; its full sequence is ATP synthase subunit a (251 aa).

Helical transmembrane passes span 34–54 (VFLT…AASS), 93–113 (FVGT…LVPF), 130–150 (INTT…AGFS), 195–215 (LVVG…VMAL), and 216–236 (GLFT…AYIG).

It belongs to the ATPase A chain family. In terms of assembly, F-type ATPases have 2 components, CF(1) - the catalytic core - and CF(0) - the membrane proton channel. CF(1) has five subunits: alpha(3), beta(3), gamma(1), delta(1), epsilon(1). CF(0) has four main subunits: a, b, b' and c.

Its subcellular location is the cellular thylakoid membrane. Functionally, key component of the proton channel; it plays a direct role in the translocation of protons across the membrane. The polypeptide is ATP synthase subunit a (Trichormus variabilis (strain ATCC 29413 / PCC 7937) (Anabaena variabilis)).